The primary structure comprises 493 residues: Glutamate--tRNA ligase (493 aa).

The 'HIGH' region motif lies at 9–19; sequence PSPTGDPHVGT. The 'KMSKS' region signature appears at 249 to 253; that stretch reads KLSKR. Position 252 (Lys-252) interacts with ATP.

The protein belongs to the class-I aminoacyl-tRNA synthetase family. Glutamate--tRNA ligase type 1 subfamily. As to quaternary structure, monomer.

It localises to the cytoplasm. It carries out the reaction tRNA(Glu) + L-glutamate + ATP = L-glutamyl-tRNA(Glu) + AMP + diphosphate. Its function is as follows. Catalyzes the attachment of glutamate to tRNA(Glu) in a two-step reaction: glutamate is first activated by ATP to form Glu-AMP and then transferred to the acceptor end of tRNA(Glu). The sequence is that of Glutamate--tRNA ligase from Marinobacter nauticus (strain ATCC 700491 / DSM 11845 / VT8) (Marinobacter aquaeolei).